We begin with the raw amino-acid sequence, 419 residues long: Peptide chain release factor subunit 1 (419 aa).

The protein belongs to the eukaryotic release factor 1 family. As to quaternary structure, heterodimer of two subunits, one of which binds GTP.

It localises to the cytoplasm. Directs the termination of nascent peptide synthesis (translation) in response to the termination codons UAA, UAG and UGA. The sequence is that of Peptide chain release factor subunit 1 from Methanococcus maripaludis (strain C6 / ATCC BAA-1332).